We begin with the raw amino-acid sequence, 946 residues long: Isoleucine--tRNA ligase (946 aa).

The short motif at 58 to 68 (PYANGSIHIGH) is the 'HIGH' region element. Glu568 serves as a coordination point for L-isoleucyl-5'-AMP. The 'KMSKS' region signature appears at 609-613 (KMSKS). Lys612 lines the ATP pocket. Zn(2+) is bound by residues Cys908, Cys911, Cys928, and Cys931.

This sequence belongs to the class-I aminoacyl-tRNA synthetase family. IleS type 1 subfamily. As to quaternary structure, monomer. Zn(2+) is required as a cofactor.

The protein resides in the cytoplasm. It catalyses the reaction tRNA(Ile) + L-isoleucine + ATP = L-isoleucyl-tRNA(Ile) + AMP + diphosphate. Catalyzes the attachment of isoleucine to tRNA(Ile). As IleRS can inadvertently accommodate and process structurally similar amino acids such as valine, to avoid such errors it has two additional distinct tRNA(Ile)-dependent editing activities. One activity is designated as 'pretransfer' editing and involves the hydrolysis of activated Val-AMP. The other activity is designated 'posttransfer' editing and involves deacylation of mischarged Val-tRNA(Ile). This Chromohalobacter salexigens (strain ATCC BAA-138 / DSM 3043 / CIP 106854 / NCIMB 13768 / 1H11) protein is Isoleucine--tRNA ligase.